A 270-amino-acid chain; its full sequence is Phosphatidylglycerol--prolipoprotein diacylglyceryl transferase (270 aa).

Transmembrane regions (helical) follow at residues 17–37, 59–79, 95–115, 129–149, 175–195, 202–222, and 237–257; these read LAIR…LWFG, MLFY…VLFY, WEGG…MWVF, FIAP…FING, PSQL…LWLF, MGAV…LAEF, and LSMG…MVVW. Position 142 (arginine 142) interacts with a 1,2-diacyl-sn-glycero-3-phospho-(1'-sn-glycerol).

The protein belongs to the Lgt family.

It localises to the cell inner membrane. It catalyses the reaction L-cysteinyl-[prolipoprotein] + a 1,2-diacyl-sn-glycero-3-phospho-(1'-sn-glycerol) = an S-1,2-diacyl-sn-glyceryl-L-cysteinyl-[prolipoprotein] + sn-glycerol 1-phosphate + H(+). Its pathway is protein modification; lipoprotein biosynthesis (diacylglyceryl transfer). Its function is as follows. Catalyzes the transfer of the diacylglyceryl group from phosphatidylglycerol to the sulfhydryl group of the N-terminal cysteine of a prolipoprotein, the first step in the formation of mature lipoproteins. This is Phosphatidylglycerol--prolipoprotein diacylglyceryl transferase from Cupriavidus metallidurans (strain ATCC 43123 / DSM 2839 / NBRC 102507 / CH34) (Ralstonia metallidurans).